The chain runs to 186 residues: UPF0340 protein SEQ_1951 (186 aa).

Belongs to the UPF0340 family.

The polypeptide is UPF0340 protein SEQ_1951 (Streptococcus equi subsp. equi (strain 4047)).